Reading from the N-terminus, the 147-residue chain is Large ribosomal subunit protein uL15 (147 aa).

Residues M1–K45 are disordered. The span at T30–G44 shows a compositional bias: basic residues.

This sequence belongs to the universal ribosomal protein uL15 family. Part of the 50S ribosomal subunit.

Its function is as follows. Binds to the 23S rRNA. This is Large ribosomal subunit protein uL15 from Thermotoga sp. (strain RQ2).